A 444-amino-acid polypeptide reads, in one-letter code: C4-dicarboxylate transport protein 2 (444 aa).

The next 6 helical transmembrane spans lie at 23-43, 61-81, 95-115, 162-182, 198-218, and 236-256; these read ILYV…WLWP, LIKM…IAHI, LVYF…VANV, GEIL…MGLG, AMFG…FGAM, and LIAT…GIIA.

It belongs to the dicarboxylate/amino acid:cation symporter (DAACS) (TC 2.A.23) family.

The protein localises to the cell inner membrane. Responsible for the transport of dicarboxylates such as succinate, fumarate, and malate from the periplasm across the membrane. This chain is C4-dicarboxylate transport protein 2, found in Bradyrhizobium diazoefficiens (strain JCM 10833 / BCRC 13528 / IAM 13628 / NBRC 14792 / USDA 110).